Consider the following 216-residue polypeptide: Ribosomal RNA large subunit methyltransferase E (216 aa).

S-adenosyl-L-methionine-binding residues include G67, W69, D87, D103, and D128. Residue K168 is the Proton acceptor of the active site.

This sequence belongs to the class I-like SAM-binding methyltransferase superfamily. RNA methyltransferase RlmE family.

The protein resides in the cytoplasm. It carries out the reaction uridine(2552) in 23S rRNA + S-adenosyl-L-methionine = 2'-O-methyluridine(2552) in 23S rRNA + S-adenosyl-L-homocysteine + H(+). Its function is as follows. Specifically methylates the uridine in position 2552 of 23S rRNA at the 2'-O position of the ribose in the fully assembled 50S ribosomal subunit. In Acinetobacter baumannii (strain AB307-0294), this protein is Ribosomal RNA large subunit methyltransferase E.